The chain runs to 385 residues: Succinate--CoA ligase [ADP-forming] subunit beta (385 aa).

The ATP-grasp domain occupies 9–244 (KEVLRKYGVS…LDEEDPKEIE (236 aa)). Residues Lys-46, 53–55 (GRG), Glu-99, Cys-102, and Glu-107 contribute to the ATP site. The Mg(2+) site is built by Asn-199 and Asp-213. Substrate is bound by residues Asn-264 and 321–323 (GIM).

The protein belongs to the succinate/malate CoA ligase beta subunit family. As to quaternary structure, heterotetramer of two alpha and two beta subunits. It depends on Mg(2+) as a cofactor.

It carries out the reaction succinate + ATP + CoA = succinyl-CoA + ADP + phosphate. It catalyses the reaction GTP + succinate + CoA = succinyl-CoA + GDP + phosphate. The protein operates within carbohydrate metabolism; tricarboxylic acid cycle; succinate from succinyl-CoA (ligase route): step 1/1. Its function is as follows. Succinyl-CoA synthetase functions in the citric acid cycle (TCA), coupling the hydrolysis of succinyl-CoA to the synthesis of either ATP or GTP and thus represents the only step of substrate-level phosphorylation in the TCA. The beta subunit provides nucleotide specificity of the enzyme and binds the substrate succinate, while the binding sites for coenzyme A and phosphate are found in the alpha subunit. This Bacillus velezensis (strain DSM 23117 / BGSC 10A6 / LMG 26770 / FZB42) (Bacillus amyloliquefaciens subsp. plantarum) protein is Succinate--CoA ligase [ADP-forming] subunit beta.